The chain runs to 1183 residues: Protein deacetylase HDAC6 (1183 aa).

A disordered region spans residues 1–61 (MTSTGQDSST…KGKMKKLSQP (61 aa)). Positions 18–29 (NPQSPLQDSSAT) are enriched in polar residues. S21 bears the Phosphoserine mark. The residue at position 32 (R32) is an Omega-N-methylarginine. The Nuclear export signal signature appears at 66–75 (LIVGLQGLDL). Histone deacetylase stretches follow at residues 86-434 (GLVF…TLLG) and 512-830 (GLVY…SLLG). H215 serves as the catalytic 1. Catalysis depends on H641, which acts as the 2. The disordered stretch occupies residues 972-1042 (ATENSANQTT…EAQEVQESEE (71 aa)). The span at 980–996 (TTSGEEASGETESFGTS) shows a compositional bias: low complexity. Phosphothreonine occurs at positions 990, 995, and 1005. A compositionally biased stretch (polar residues) spans 997–1008 (PSSNASKQTTGA). Phosphoserine is present on S1009. Positions 1021-1035 (ELGLSSTLELSSEAQ) are enriched in low complexity. The UBP-type zinc finger occupies 1079–1177 (SWCPHLMAVC…NAAHQNKFGE (99 aa)). Zn(2+) is bound by residues C1081, H1083, C1101, C1104, C1113, C1116, and C1121. The segment at 1122–1124 (SRY) is ubiquitin binding. Zn(2+)-binding residues include H1128, H1132, H1138, C1151, and C1154. A ubiquitin binding region spans residues 1150–1157 (WCYLCQAY).

Belongs to the histone deacetylase family. HD type 2 subfamily. In terms of assembly, forms a trimeric complex in the nucleus consisting of BANP, HDAC6 and KHDRBS1/SAM68; HDAC6 keeps KHDRBS1 in a deacetylated state which inhibits the inclusion of CD44 alternate exons. The complex is disrupted by MAPK1/MAPK3-mediated phosphorylation of BANP which results in BANP export to the cytoplasm. This facilitates acetylation of KHDRBS1 and CD44 variant exon inclusion. Interacts with SIRT2 (via both phosphorylated, unphosphorylated, active or inactive forms); the interaction is necessary for the complex to interact with alpha-tubulin. Under proteasome impairment conditions, interacts with UBD via its histone deacetylase 1 and UBP-type zinc-finger regions. Interacts with BBIP1, CBFA2T3, CYLD, DDIT3/CHOP, ZMYND15, F-actin and HDAC11. Interacts with RIPOR2; this interaction occurs during early myogenic differentiation and prevents HDAC6 to deacetylate tubulin. Interacts with AURKA; AURKA-mediated phosphorylation of HDAC6 promotes deacetylation of alpha-tubulin. Interacts with DYSF; this interaction occurs during early myogenic differentiation. Interacts with TPPP; inhibiting the tubulin deacetylase activity of HDAC6. Interacts with DYNLL1. Interacts with ATP13A2; the interaction results in recruitment of HDAC6 to lysosomes to promote CTTN deacetylation. Interacts with CCDC141 (via the N-terminal region); inhibiting the deacetylase activity of HDAC6. Interacts with IPO7; the interaction facilitates HDAC6 nuclear translocation in dental papilla cells. The cofactor is Zn(2+). Phosphorylated by AURKA; phosphorylation increases HDAC6-mediated deacetylation of alpha-tubulin and subsequent disassembly of cilia. In terms of processing, ubiquitinated. Its polyubiquitination however does not lead to its degradation. Post-translationally, sumoylated in vitro.

The protein localises to the cytoplasm. It is found in the cytoskeleton. Its subcellular location is the nucleus. The protein resides in the perikaryon. It localises to the cell projection. The protein localises to the dendrite. It is found in the axon. Its subcellular location is the cilium. The protein resides in the microtubule organizing center. It localises to the centrosome. The protein localises to the cilium basal body. The enzyme catalyses N(6)-acetyl-L-lysyl-[protein] + H2O = L-lysyl-[protein] + acetate. The catalysed reaction is N(6)-acetyl-L-lysyl-[alpha-tubulin] + H2O = L-lysyl-[alpha-tubulin] + acetate. It functions in the pathway protein modification; protein ubiquitination. Deacetylates a wide range of non-histone substrates. Plays a central role in microtubule-dependent cell motility by mediating deacetylation of tubulin. Required for cilia disassembly via deacetylation of alpha-tubulin. Alpha-tubulin deacetylation results in destabilization of dynamic microtubules. Promotes deacetylation of CTTN, leading to actin polymerization, promotion of autophagosome-lysosome fusion and completion of autophagy. Deacetylates SQSTM1. Deacetylates peroxiredoxins PRDX1 and PRDX2, decreasing their reducing activity. Deacetylates antiviral protein RIGI in the presence of viral mRNAs which is required for viral RNA detection by RIGI. Sequentially deacetylates and polyubiquitinates DNA mismatch repair protein MSH2 which leads to MSH2 degradation, reducing cellular sensitivity to DNA-damaging agents and decreasing cellular DNA mismatch repair activities. Deacetylates DNA mismatch repair protein MLH1 which prevents recruitment of the MutL alpha complex (formed by the MLH1-PMS2 heterodimer) to the MutS alpha complex (formed by the MSH2-MSH6 heterodimer), leading to tolerance of DNA damage. Deacetylates RHOT1/MIRO1 which blocks mitochondrial transport and mediates axon growth inhibition. Deacetylates transcription factor SP1 which leads to increased expression of ENG, positively regulating angiogenesis. Deacetylates KHDRBS1/SAM68 which regulates alternative splicing by inhibiting the inclusion of CD44 alternate exons. Promotes odontoblast differentiation following IPO7-mediated nuclear import and subsequent repression of RUNX2 expression. In addition to its protein deacetylase activity, plays a key role in the degradation of misfolded proteins: when misfolded proteins are too abundant to be degraded by the chaperone refolding system and the ubiquitin-proteasome, mediates the transport of misfolded proteins to a cytoplasmic juxtanuclear structure called aggresome. Probably acts as an adapter that recognizes polyubiquitinated misfolded proteins and targets them to the aggresome, facilitating their clearance by autophagy. The sequence is that of Protein deacetylase HDAC6 from Rattus norvegicus (Rat).